Consider the following 340-residue polypeptide: Dihydroorotate dehydrogenase (quinone) (340 aa).

FMN contacts are provided by residues 67-71 (AGFDK) and Thr-91. Lys-71 lines the substrate pocket. 116–120 (NRMGF) contributes to the substrate binding site. Asn-143 and Asn-176 together coordinate FMN. Residue Asn-176 participates in substrate binding. Ser-179 (nucleophile) is an active-site residue. Asn-181 serves as a coordination point for substrate. Residues Lys-217 and Thr-245 each contribute to the FMN site. 246 to 247 (NT) serves as a coordination point for substrate. Residues Gly-267, Gly-296, and 317–318 (YT) contribute to the FMN site.

Belongs to the dihydroorotate dehydrogenase family. Type 2 subfamily. As to quaternary structure, monomer. Requires FMN as cofactor.

It is found in the cell membrane. It carries out the reaction (S)-dihydroorotate + a quinone = orotate + a quinol. It participates in pyrimidine metabolism; UMP biosynthesis via de novo pathway; orotate from (S)-dihydroorotate (quinone route): step 1/1. In terms of biological role, catalyzes the conversion of dihydroorotate to orotate with quinone as electron acceptor. This Christiangramia forsetii (strain DSM 17595 / CGMCC 1.15422 / KT0803) (Gramella forsetii) protein is Dihydroorotate dehydrogenase (quinone).